The following is a 509-amino-acid chain: Maturase K (509 aa).

The protein belongs to the intron maturase 2 family. MatK subfamily.

The protein localises to the plastid. It is found in the chloroplast. Its function is as follows. Usually encoded in the trnK tRNA gene intron. Probably assists in splicing its own and other chloroplast group II introns. This is Maturase K from Nicotiana acuminata (Acuminate tobacco).